The primary structure comprises 357 residues: Endo-1,4-beta-xylanase Xyn11B (357 aa).

A signal peptide spans 1–27 (MKIFQNTKNVIVSIAWAAALCTSAVSA). Residues 29 to 226 (TLTSNSTGTN…SRGSSDITVS (198 aa)) enclose the GH11 domain. Glu-116 serves as the catalytic Nucleophile. Glu-213 functions as the Proton donor in the catalytic mechanism. A disordered region spans residues 220-245 (SSDITVSQGGSSGGGNSSSSSSASGG).

This sequence belongs to the glycosyl hydrolase 11 (cellulase G) family.

Its subcellular location is the secreted. The catalysed reaction is Endohydrolysis of (1-&gt;4)-beta-D-xylosidic linkages in xylans.. It participates in glycan degradation; xylan degradation. Endo-acting xylanase which specifically cleaves internal linkages on the xylan backbone, releasing xylooligosaccharides. Is able to hydrolyze glucuronoxylan and the arabinoxylan from wheat. This is Endo-1,4-beta-xylanase Xyn11B (xyn11B) from Cellvibrio japonicus (Pseudomonas fluorescens subsp. cellulosa).